The sequence spans 249 residues: Adapter protein MecA (249 aa).

This sequence belongs to the MecA family. In terms of assembly, homodimer.

Its function is as follows. Enables the recognition and targeting of unfolded and aggregated proteins to the ClpC protease or to other proteins involved in proteolysis. The chain is Adapter protein MecA from Streptococcus thermophilus (strain ATCC BAA-491 / LMD-9).